The sequence spans 278 residues: Putative non-heme haloperoxidase (278 aa).

The AB hydrolase-1 domain occupies 24–240; sequence PLVFLHGLSV…STAKITNASF (217 aa). Residues serine 97 and aspartate 221 contribute to the active site.

The protein belongs to the AB hydrolase superfamily.

The polypeptide is Putative non-heme haloperoxidase (59.2) (Mycobacterium (Mycobacteriophage D29)).